Reading from the N-terminus, the 98-residue chain is Large ribosomal subunit protein uL23 (98 aa).

The protein belongs to the universal ribosomal protein uL23 family. In terms of assembly, part of the 50S ribosomal subunit. Contacts protein L29, and trigger factor when it is bound to the ribosome.

In terms of biological role, one of the early assembly proteins it binds 23S rRNA. One of the proteins that surrounds the polypeptide exit tunnel on the outside of the ribosome. Forms the main docking site for trigger factor binding to the ribosome. This chain is Large ribosomal subunit protein uL23, found in Sorangium cellulosum (strain So ce56) (Polyangium cellulosum (strain So ce56)).